The following is a 622-amino-acid chain: Probable Xaa-Pro aminopeptidase P (622 aa).

4 residues coordinate Mn(2+): aspartate 419, aspartate 430, glutamate 528, and glutamate 542.

It belongs to the peptidase M24B family. Mn(2+) serves as cofactor.

The catalysed reaction is Release of any N-terminal amino acid, including proline, that is linked to proline, even from a dipeptide or tripeptide.. Catalyzes the removal of a penultimate prolyl residue from the N-termini of peptides. The protein is Probable Xaa-Pro aminopeptidase P (AMPP) of Coprinopsis cinerea (strain Okayama-7 / 130 / ATCC MYA-4618 / FGSC 9003) (Inky cap fungus).